A 576-amino-acid polypeptide reads, in one-letter code: MNIQALLSDKVSQALIAAGAPADCEAQVRQSAKAQFGDYQANGVMAVAKKLGMQPRQLAERVVELLDLTGIASKIEIAGPGFINIFLDRQWVAEKVEYALTAPKLGVAPVEPQTIVVDYSAPNVAKQMHVGHLRSTIIGDAAVRTLAFLGHNVIRANHVGDWGTQFGMLIAYLEKMQNENASDMGLSDLELFYQQAKKTYDEDEEFALRARAYVVKLQSGDEYCRQMWRKLVDITMAQNQVAYDRLNVTLTKDDVMGESLYNAMLPEIVADLKAKGLAVESEGATVVYLDEYKNKDGEPMGVIIQKKDGGYLYTTTDIACAKYRYETLGADRILYYIDSRQHQHLMQAWTIVRKAGYVPESVPLEHHMFGMMLGKDGKPFKTRSGGTVKLSDLLDEAVERAGKLIAEKNPDMPADELKQVINAVGIGAVKYADLSKSRTTDYIFDWDNMLALDGNTAPYMQYAYTRVVSVFRRAGVDETSLTLPLVVTEDREATLATRLLQFEEIITTVAREGTPHVMCSYLYDLAGLFSSFYEHCQILNAESEEIRQSRLKLAMLTAKTLKQGLDTLGIQTVERM.

The short motif at 122–132 (PNVAKQMHVGH) is the 'HIGH' region element.

This sequence belongs to the class-I aminoacyl-tRNA synthetase family. In terms of assembly, monomer.

Its subcellular location is the cytoplasm. The enzyme catalyses tRNA(Arg) + L-arginine + ATP = L-arginyl-tRNA(Arg) + AMP + diphosphate. This Yersinia pestis bv. Antiqua (strain Antiqua) protein is Arginine--tRNA ligase.